The primary structure comprises 285 residues: Chromatin modification-related protein YNG2 (285 aa).

The stretch at 19 to 54 forms a coiled coil; the sequence is LEVKHLLQELKNKDVQLQEARKRYQTKDNQIHKFIR. Residues 138–165 are compositionally biased toward polar residues; the sequence is NGLSDNLSGTTTPRGHSASTPVADNAAN. Positions 138–218 are disordered; the sequence is NGLSDNLSGT…SRPNEGPGNN (81 aa). Over residues 193–207 the composition is skewed to basic and acidic residues; that stretch reads MKSEDFEDKKYDNDS. Residues 225 to 276 form a PHD-type zinc finger; it reads NLYCFCQRVSFGEMIGCDNDDCKFEWFHWSCVGITAPPKDDEIWYCPDCAPK. Residues cysteine 228, cysteine 230, cysteine 241, cysteine 246, histidine 252, cysteine 255, cysteine 270, and cysteine 273 each contribute to the Zn(2+) site.

Belongs to the ING family. In terms of assembly, interacts with H3K4me3 and to a lesser extent with H3K4me2. Component of the NuA4 histone acetyltransferase complex.

It localises to the nucleus. Its function is as follows. Component of the NuA4 histone acetyltransferase complex which is involved in transcriptional activation of selected genes principally by acetylation of nucleosomal histone H4 and H2A. The NuA4 complex is also involved in DNA repair. Involved in cell cycle progression and meiosis. The protein is Chromatin modification-related protein YNG2 (YNG2) of Debaryomyces hansenii (strain ATCC 36239 / CBS 767 / BCRC 21394 / JCM 1990 / NBRC 0083 / IGC 2968) (Yeast).